A 160-amino-acid polypeptide reads, in one-letter code: Glutathione peroxidase homolog BsaA (160 aa).

The active site involves C35.

It belongs to the glutathione peroxidase family.

In Bacillus subtilis (strain 168), this protein is Glutathione peroxidase homolog BsaA (bsaA).